Reading from the N-terminus, the 1887-residue chain is Bifunctional serine/threonine-protein kinase/NEDD4-like E3 ubiquitin-protein ligase (1887 aa).

Disordered regions lie at residues 19–55 and 72–98; these read TPQVNLFNNSNNGGNNSNNGGNNSTPTLTKTPSTTNF and TDNYNFNNNNNNNNNNNNNNNNNTKEN. Low complexity-rich tracts occupy residues 26–54 and 72–97; these read NNSNNGGNNSNNGGNNSTPTLTKTPSTTN and TDNYNFNNNNNNNNNNNNNNNNNTKE. RCC1 repeat units lie at residues 206–260, 262–314, 356–409, 411–470, 472–528, and 529–581; these read QGNL…ALTI, GKVY…NNNN, KGLL…VLTN, GLVF…AISD, NDTY…AMSI, and DGSL…IVEK. A disordered region spans residues 299–333; that stretch reads NNNNNNNNNNSTNNNNNNNNDGAQQQFSLSQNSSS. Disordered regions lie at residues 594–619, 823–858, and 1030–1088; these read LPSSTQSQQQTELSLPSSVNSSSDSN, VLVHQDEKQQQREKSETELEEEQDEEEEDSEIKNGT, and DDDN…NNNN. A compositionally biased stretch (basic and acidic residues) spans 825–839; it reads VHQDEKQQQREKSET. The segment covering 840–852 has biased composition (acidic residues); the sequence is ELEEEQDEEEEDS. The span at 1036 to 1088 shows a compositional bias: low complexity; the sequence is ENNSVNNNSNNNNNNNNNNNNNNNNNNNNNNNIDNNINSNSINDSSNNNNNNN. In terms of domain architecture, Protein kinase spans 1158 to 1437; the sequence is YDIIKTLSTH…AHQIAVHPYF (280 aa). Residues 1164–1172 and K1184 contribute to the ATP site; that span reads LSTHPHNVY. Catalysis depends on D1281, which acts as the Proton acceptor. The region spanning 1501-1887 is the HECT domain; the sequence is ESNKLFCRLE…LEYVDGFAFI (387 aa). The tract at residues 1586–1628 is disordered; it reads NNNNNNEENNNNNNNNNNNNNNNNNNNNNNNNNNNNNNNNNEE. The active-site Glycyl thioester intermediate is the C1855.

In the N-terminal section; belongs to the protein kinase superfamily. Ser/Thr protein kinase family. This sequence in the C-terminal section; belongs to the protein kinase superfamily. CAMK Ser/Thr protein kinase family.

The enzyme catalyses L-seryl-[protein] + ATP = O-phospho-L-seryl-[protein] + ADP + H(+). It catalyses the reaction L-threonyl-[protein] + ATP = O-phospho-L-threonyl-[protein] + ADP + H(+). The catalysed reaction is S-ubiquitinyl-[E2 ubiquitin-conjugating enzyme]-L-cysteine + [acceptor protein]-L-lysine = [E2 ubiquitin-conjugating enzyme]-L-cysteine + N(6)-ubiquitinyl-[acceptor protein]-L-lysine.. It participates in protein modification; protein ubiquitination. The polypeptide is Bifunctional serine/threonine-protein kinase/NEDD4-like E3 ubiquitin-protein ligase (Dictyostelium discoideum (Social amoeba)).